Reading from the N-terminus, the 221-residue chain is Molybdenum cofactor guanylyltransferase (221 aa).

Residues 18-20, Lys-35, Asn-63, Asp-81, and Asp-112 each bind GTP; that span reads IAG. Mg(2+) is bound at residue Asp-112.

The protein belongs to the MobA family. As to quaternary structure, monomer. It depends on Mg(2+) as a cofactor.

It is found in the cytoplasm. The enzyme catalyses Mo-molybdopterin + GTP + H(+) = Mo-molybdopterin guanine dinucleotide + diphosphate. Its function is as follows. Transfers a GMP moiety from GTP to Mo-molybdopterin (Mo-MPT) cofactor (Moco or molybdenum cofactor) to form Mo-molybdopterin guanine dinucleotide (Mo-MGD) cofactor. The sequence is that of Molybdenum cofactor guanylyltransferase from Brucella abortus (strain S19).